The chain runs to 158 residues: Cyclic pyranopterin monophosphate synthase (158 aa).

Substrate is bound by residues 75–77 (LCH) and 113–114 (ME). Aspartate 128 is a catalytic residue.

This sequence belongs to the MoaC family. As to quaternary structure, homohexamer; trimer of dimers.

It carries out the reaction (8S)-3',8-cyclo-7,8-dihydroguanosine 5'-triphosphate = cyclic pyranopterin phosphate + diphosphate. It functions in the pathway cofactor biosynthesis; molybdopterin biosynthesis. Catalyzes the conversion of (8S)-3',8-cyclo-7,8-dihydroguanosine 5'-triphosphate to cyclic pyranopterin monophosphate (cPMP). In Pasteurella multocida (strain Pm70), this protein is Cyclic pyranopterin monophosphate synthase.